The following is a 60-amino-acid chain: uncharacterized protein (60 aa).

This is an uncharacterized protein from Treponema pallidum (strain Nichols).